The following is a 550-amino-acid chain: Nucleoside hydrolase 4 (550 aa).

Belongs to the IUNH family.

The protein resides in the cytoplasm. In terms of biological role, may be involved in the degradation of nucleosides. The chain is Nucleoside hydrolase 4 from Arabidopsis thaliana (Mouse-ear cress).